The sequence spans 133 residues: Cytochrome c-554 (133 aa).

Position 1 is a pyrrolidone carboxylic acid (Q1). The heme c site is built by M17, C122, C125, and H126.

Post-translationally, binds 1 heme c group covalently per subunit.

Its subcellular location is the periplasm. Monoheme c-type cytochrome, that is particularly expressed when cells generate energy via aerobic respiration. The chain is Cytochrome c-554 (cycF) from Cereibacter sphaeroides (Rhodobacter sphaeroides).